A 417-amino-acid polypeptide reads, in one-letter code: Ankyrin repeat and SAM domain-containing protein 4B (417 aa).

The tract at residues methionine 1 to leucine 252 is mediates localization to microvilli. ANK repeat units lie at residues aspartate 31–arginine 60, tryptophan 64–alanine 93, and aspartate 97–isoleucine 126. Residues lysine 130–threonine 164 adopt a coiled-coil conformation. Residues glutamate 151–glycine 195 are disordered. Residues glycine 171–alanine 190 are compositionally biased toward polar residues. Residues serine 253–threonine 346 are mediates interaction with MYO7B. Serine 283 carries the post-translational modification Phosphoserine. The interval arginine 305–proline 330 is disordered. Over residues glutamate 310–glutamate 322 the composition is skewed to acidic residues. Residues phenylalanine 351–lysine 403 form the SAM domain. The short motif at threonine 415–leucine 417 is the PDZ-binding; mediates interaction with USH1C element.

Part of the IMAC/intermicrovillar adhesion complex/intermicrovillar tip-link complex composed of ANKS4B, MYO7B, USH1C, CDHR2 and CDHR5. Interacts with USH1C; the interaction is direct and is required for ANKS4B localization to the tip of microvilli. Interacts with MYO7B; the interaction is direct. May interact with HSPA5. Expressed in kidney and small intestine.

It is found in the cell projection. The protein localises to the microvillus. Its function is as follows. As part of the intermicrovillar adhesion complex/IMAC plays a role in epithelial brush border differentiation, controlling microvilli organization and length. Plays a role in assembly of the complex. May play a role in cellular response to endoplasmic reticulum stress. This chain is Ankyrin repeat and SAM domain-containing protein 4B, found in Homo sapiens (Human).